Reading from the N-terminus, the 210-residue chain is Large ribosomal subunit protein uL3 (210 aa).

Positions 121–150 (GGIKRHGFHRGPMAHGSKYHRRPGSLGAKG) are disordered.

It belongs to the universal ribosomal protein uL3 family. In terms of assembly, part of the 50S ribosomal subunit. Forms a cluster with proteins L14 and L19.

One of the primary rRNA binding proteins, it binds directly near the 3'-end of the 23S rRNA, where it nucleates assembly of the 50S subunit. This chain is Large ribosomal subunit protein uL3, found in Pelotomaculum thermopropionicum (strain DSM 13744 / JCM 10971 / SI).